A 393-amino-acid chain; its full sequence is Isocitrate dehydrogenase [NAD] subunit gamma, mitochondrial (393 aa).

The N-terminal 39 residues, 1–39, are a transit peptide targeting the mitochondrion; that stretch reads MALKVATVAGSAAKAVLGPALLCRPWEVLGAHEVPSRNI. Positions 120 and 133 each coordinate citrate. Residues arginine 136, arginine 167, and aspartate 254 each coordinate substrate. Residue aspartate 254 coordinates Mn(2+). 3 residues coordinate ADP: asparagine 312, threonine 313, and asparagine 324.

It belongs to the isocitrate and isopropylmalate dehydrogenases family. Heterooligomer of subunits alpha (IDH3A), beta (IDH3B), and gamma (IDH3G) in the apparent ratio of 2:1:1. The heterodimer containing one IDH3A and one IDH3B subunit and the heterodimer containing one IDH3A and one IDH3G subunit assemble into a heterotetramer (which contains two subunits of IDH3A, one of IDH3B and one of IDH3G) and further into the heterooctamer. It depends on Mg(2+) as a cofactor. The cofactor is Mn(2+).

It localises to the mitochondrion. Its activity is regulated as follows. The heterotetramer and the heterodimer composed of IDH3A and IDH3G subunits can be allosterically activated by citrate (CIT) or/and ADP, and the two activators can act independently or synergistically. The heterodimer composed of IDH3A and IDH3B subunits cannot be allosterically regulated and the allosteric regulation of the heterotetramer is through the IDH3G subunit and not the IDH3B subunit. The IDH3G subunit contains the allosteric site which consists of a CIT-binding site and an ADP-binding site, and the binding of CIT and ADP causes conformational changes at the allosteric site which are transmitted to the active site in the catalytic subunit (IDH3A) through a cascade of conformational changes at the heterodimer interface, leading to stabilization of the isocitrate-binding at the active site and thus activation of the enzyme. ATP can activate the heterotetramer and the heterodimer composed of IDH3A and IDH3G subunits at low concentrations but inhibits their activities at high concentrations, whereas ATP exhibits only inhibitory effect on the heterodimer composed of IDH3A and IDH3B subunits. Functionally, regulatory subunit which plays a role in the allosteric regulation of the enzyme catalyzing the decarboxylation of isocitrate (ICT) into alpha-ketoglutarate. The heterodimer composed of the alpha (IDH3A) and beta (IDH3B) subunits and the heterodimer composed of the alpha (IDH3A) and gamma (IDH3G) subunits, have considerable basal activity but the full activity of the heterotetramer (containing two subunits of IDH3A, one of IDH3B and one of IDH3G) requires the assembly and cooperative function of both heterodimers. The protein is Isocitrate dehydrogenase [NAD] subunit gamma, mitochondrial (IDH3G) of Homo sapiens (Human).